The primary structure comprises 251 residues: MAGHSKWANIKHKKARSDEKRGKEFTKIAKEITIAVRSGGSGDPEANSKLKLAIQKAKAINMPNENINRAVKKGTGEIDSETIEEIIYEGYAPGGIAVMLEIATDNRNRTASEIRHLFSKNNGNLGESGCVAWMFKRVGLISIKKDKLNMEEEEFMLKVLDAGAEDVREEDEEYEVLTLPESFMLVKEAMEEEKLLIEEADIVMLPENTVDITDVDMAGKIIKLIELLEDHDDVQNVYTNMSIPDEIIAAL.

The segment at M1–K23 is disordered.

It belongs to the TACO1 family.

The protein resides in the cytoplasm. The sequence is that of Probable transcriptional regulatory protein Swol_1435 from Syntrophomonas wolfei subsp. wolfei (strain DSM 2245B / Goettingen).